Consider the following 599-residue polypeptide: Dictomallein-2 (599 aa).

The first 20 residues, 1–20 (MKLILIYLILVFNLFNFINC), serve as a signal peptide directing secretion. The Peptidase M66 domain maps to 145–407 (PDVGQDYTLK…QNYFKNSIYY (263 aa)). His298 contributes to the Zn(2+) binding site. Residue Glu299 is part of the active site. Zn(2+)-binding residues include His302 and His308.

Belongs to the dictomallein family. The cofactor is Zn(2+).

It localises to the secreted. The protein is Dictomallein-2 (dtmlB) of Dictyostelium discoideum (Social amoeba).